Reading from the N-terminus, the 477-residue chain is UDP-N-acetylglucosamine pyrophosphorylase (477 aa).

The Substrate binding signature appears at 109-112; sequence MAGG. UTP contacts are provided by residues 109–112, Lys-123, and Gln-194; that span reads MAGG. Position 218 is a phosphoserine (Ser-218). Gly-221 is a UTP binding site. Residue Asn-222 participates in substrate binding. UTP is bound at residue Asp-252. The short motif at 302–303 is the Substrate binding element; it reads EY. Residue Lys-377 participates in UTP binding. Substrate is bound at residue Lys-409. At Ser-461 the chain carries Phosphoserine.

This sequence belongs to the UDPGP type 1 family.

It localises to the cytoplasm. The enzyme catalyses N-acetyl-alpha-D-glucosamine 1-phosphate + UTP + H(+) = UDP-N-acetyl-alpha-D-glucosamine + diphosphate. Its pathway is nucleotide-sugar biosynthesis; UDP-N-acetyl-alpha-D-glucosamine biosynthesis; UDP-N-acetyl-alpha-D-glucosamine from N-acetyl-alpha-D-glucosamine 1-phosphate: step 1/1. UDP-N-acetylglucosamine pyrophosphorylase that utilizes N-acetylglucosamine-1-phosphate as substrate. Together with AGM1, is involved in the production of UDP-N-acetylglucosamine from N-acetylglucosamine-6-phosphate. The protein is UDP-N-acetylglucosamine pyrophosphorylase (QRI1) of Saccharomyces cerevisiae (strain ATCC 204508 / S288c) (Baker's yeast).